The chain runs to 252 residues: Cell division protein ZapD (252 aa).

Belongs to the ZapD family. In terms of assembly, interacts with FtsZ.

The protein localises to the cytoplasm. Its function is as follows. Cell division factor that enhances FtsZ-ring assembly. Directly interacts with FtsZ and promotes bundling of FtsZ protofilaments, with a reduction in FtsZ GTPase activity. This Ralstonia nicotianae (strain ATCC BAA-1114 / GMI1000) (Ralstonia solanacearum) protein is Cell division protein ZapD.